A 68-amino-acid chain; its full sequence is Copper transport protein ATOX1 (68 aa).

Positions 1–63 constitute an HMA domain; the sequence is MPKHEFSVDM…TLNKTGKAVS (63 aa). Cys12 and Cys15 together coordinate Cu cation. Phosphoserine is present on Ser47. The residue at position 60 (Lys60) is an N6-acetyllysine.

The protein belongs to the ATX1 family. As to quaternary structure, homodimer. Interacts with ATP7B. Interacts with ATP7A. Interacts (via dimer form) with SLC31A1 (via C-terminal domain); this interaction improves ATOX1 stability and controls intracellular Cu(I) levels.

Binds and deliver cytosolic copper to the copper ATPase proteins. May be important in cellular antioxidant defense. In Mus musculus (Mouse), this protein is Copper transport protein ATOX1.